A 101-amino-acid polypeptide reads, in one-letter code: MAPKYELDQLVNSICKSTRDTDASKILKEIEDNNSYITEVQLKRLLKLHDGSFRESLTPLQKLHDKYNEIVMRQGDLQSWAELIDRDLRVLELTMQLAKRR.

Belongs to the BLOC1S1 family. Component of the biogenesis of lysosome-related organelles complex-1 (BLOC-1).

It is found in the endosome. Its function is as follows. Component of the biogenesis of lysosome-related organelles complex-1 (BLOC-1), a complex involved in endosomal cargo sorting. This chain is Biogenesis of lysosome-related organelles complex 1 subunit BLS1 (BLS1), found in Zygosaccharomyces rouxii (strain ATCC 2623 / CBS 732 / NBRC 1130 / NCYC 568 / NRRL Y-229).